The chain runs to 178 residues: M-phase-specific PLK1-interacting protein (178 aa).

Residues 1–15 (MHRPNFRPPTPPYPS) show a composition bias toward pro residues. A disordered region spans residues 1 to 134 (MHRPNFRPPT…RGREKRMSNE (134 aa)). Residues 17–34 (GIGGWGGGNNFRGALGGG) are compositionally biased toward gly residues. Position 36 is an asymmetric dimethylarginine (R36). Phosphoserine occurs at positions 39 and 46. T50 bears the Phosphothreonine mark. The residue at position 56 (R56) is an Omega-N-methylarginine. Asymmetric dimethylarginine is present on residues R58, R67, and R76. Residues 78-96 (GSPSPGGYPGSYSRSPAGS) show a composition bias toward low complexity. Residues S79, S81, S92, S103, and S114 each carry the phosphoserine modification. The segment covering 97-121 (QHQFGYSPGQQQTYPQGSPRTSTPF) has biased composition (polar residues). An Omega-N-methylarginine modification is found at R116. T119 carries the phosphothreonine modification. Phosphoserine is present on residues S123 and S132.

In terms of assembly, interacts with PLK1; phosphorylation-dependent. In terms of processing, phosphorylated during mitosis in the cell cycle probably by CDK1.

Its subcellular location is the nucleus. The protein resides in the cytoplasm. It is found in the cytoskeleton. It localises to the microtubule organizing center. The protein localises to the centrosome. Its function is as follows. May play a role in maintenance of cell cycle integrity by regulating mitosis or cytokinesis. The chain is M-phase-specific PLK1-interacting protein (Mplkip) from Mus musculus (Mouse).